A 531-amino-acid polypeptide reads, in one-letter code: Cytochrome P450 monooxygenase acuC (531 aa).

The chain crosses the membrane as a helical span at residues 3-23 (PIVWLLGGAIALLVVVIRAAW). Cysteine 447 serves as a coordination point for heme.

Belongs to the cytochrome P450 family. The cofactor is heme.

Its subcellular location is the endoplasmic reticulum membrane. It carries out the reaction 3-methylphenol + reduced [NADPH--hemoprotein reductase] + O2 = 3-hydroxybenzyl alcohol + oxidized [NADPH--hemoprotein reductase] + H2O + H(+). Its pathway is secondary metabolite biosynthesis. Cytochrome P450 monooxygenase; part of the gene cluster that mediates the biosynthesis of aculins. The pathway begins with the synthesis of 6-methylsalicylic acid by the polyketide synthase (PKS) acuA via condensation of acetate and malonate units. The 6-methylsalicylic acid decarboxylase acuB then catalyzes the decarboxylation of 6-methylsalicylic acid to yield m-cresol (also known as 3-methylphenol). These first reactions occur in the cytosol. The intermediate m-cresol is then transported into the endoplasmic reticulum where the cytochrome P450 monooxygenase acuC converts it to m-hydroxybenzyl alcohol, which is further converted to gentisyl alcohol by the cytochrome P450 monooxygenase acuD. Gentisyl alcohol is further oxidized by the oxidoreductase acuE that probably catalyzes hydroxylation of the aromatic ring. The aromatic system might then be opened by oxidation through a Baeyer-Villiger type of oxidation, which could be catalyzed by acuF, with the carboxylic acid at C-1 subsequently reduced to an aldehyde by acuG. Subsequently, a hemiacetal is formed, before the dehydrogenase acuH would reduce the double bond between C-4 and C-6. Finally, keto-enol tautomerism results in formation of aculinic acid, which exists as two diastereomers (both R/S configurations at C-1) by non-enzymatic hemiacetal formation. The carboxypeptidase acuI could be involved in the linking of aculinic acid to an aculene A moiety produced by the aculene biosynthesis cluster and which leads to the production of aculin A. AcuI may also be involved in the attachment of proline to aculinic acid to form epi-aculins A and B. In Aspergillus aculeatus (strain ATCC 16872 / CBS 172.66 / WB 5094), this protein is Cytochrome P450 monooxygenase acuC.